Reading from the N-terminus, the 458-residue chain is Histone acetyltransferase KAT8 (458 aa).

Composition is skewed to low complexity over residues 1-17 (MAAQ…TSGT) and 25-35 (PGENAAVEGPA). Residues 1–52 (MAAQGATAAVAATTSGTVGEGEPGPGENAAVEGPARSPGRVSPPTPARGEPE) form a disordered region. Ala2 carries the N-acetylalanine modification. 2 positions are modified to phosphoserine: Ser37 and Ser42. The Tudor-knot domain maps to 55-110 (VEIGETYLCRRPDSTWHSAEVIQSRVNDQEGREEFYVHYVGFNRRLDEWVDKNRLA). At Lys113 the chain carries N6-acetyllysine. The Nuclear localization signal signature appears at 140-149 (RNQKRKHDEI). The 274-residue stretch at 174 to 447 (TKVKYVDKIH…VDSVCLKWAP (274 aa)) folds into the MYST-type HAT domain. A sufficient for interaction with KANSL1 region spans residues 174–458 (TKVKYVDKIH…KHKQVKLSKK (285 aa)). The C2HC MYST-type zinc finger occupies 207–232 (LWLCEYCLKYMKFEKSYRFHLGQCQW). Positions 210, 213, 226, and 230 each coordinate Zn(2+). Residue Lys274 is modified to N6-acetyllysine. Residues Ile317, Thr319, Arg325, Arg326, Gly327, Gly329, and Lys330 each coordinate acetyl-CoA. Position 348 is a phosphoserine (Ser348). The active-site Proton donor/acceptor is the Glu350. The acetyl-CoA site is built by Ser354, Ser363, Tyr408, and Lys432.

This sequence belongs to the MYST (SAS/MOZ) family. In terms of assembly, component of a multisubunit histone acetyltransferase complex (MSL) at least composed of the MOF/KAT8, MSL1/hampin, MSL2L1 and MSL3L1. Component of the NSL complex at least composed of MOF/KAT8, KANSL1, KANSL2, KANSL3, MCRS1, PHF20, OGT1/OGT, WDR5 and HCFC1. Component of some MLL1/MLL complex, at least composed of the core components KMT2A/MLL1, ASH2L, HCFC1, WDR5 and RBBP5, as well as the facultative components BACC1, CHD8, E2F6, HSP70, INO80C, KANSL1, LAS1L, MAX, MCRS1, MGA, MOF/KAT8, PELP1, PHF20, PRP31, RING2, RUVB1/TIP49A, RUVB2/TIP49B, SENP3, TAF1, TAF4, TAF6, TAF7, TAF9 and TEX10. Interacts with the chromodomain of MORF4L1/MRG15. Interacts with ATM (via its Tudor-knot domain); possibly regulating the activity of ATM. Interacts with NELFD. In terms of processing, acetylation at Lys-274 facilitates cognate substrate Lys-binding and acetylation. Although considered as an autoacetylation event, acetylation at Lys-274 probably takes place via a non-enzymatic process following acetyl-CoA-binding, which primes KAT8 for cognate protein-lysine acetylation. As to expression, during oocyte development, expressed in both oocytes and granulosa cells.

Its subcellular location is the nucleus. It localises to the chromosome. The protein resides in the mitochondrion. The enzyme catalyses L-lysyl-[histone] + acetyl-CoA = N(6)-acetyl-L-lysyl-[histone] + CoA + H(+). It catalyses the reaction L-lysyl-[protein] + acetyl-CoA = N(6)-acetyl-L-lysyl-[protein] + CoA + H(+). The catalysed reaction is propanoyl-CoA + L-lysyl-[protein] = N(6)-propanoyl-L-lysyl-[protein] + CoA + H(+). The acetyltransferase activity is inhibited by anacardic acid derivatives. Its function is as follows. Histone acetyltransferase that catalyzes histone H4 acetylation at 'Lys-5'- and 'Lys-8' (H4K5ac and H4K8ac) or 'Lys-16' (H4K16ac), depending on the context. Catalytic component of the MSL histone acetyltransferase complex, a multiprotein complex that mediates the majority of histone H4 acetylation at 'Lys-16' (H4K16ac), an epigenetic mark that prevents chromatin compaction. H4K16ac constitutes the only acetylation mark intergenerationally transmitted and regulates key biological processes, such as oogenesis, embryonic stem cell pluripotency, hematopoiesis or glucose metabolism. The MSL complex is required for chromosome stability and genome integrity by maintaining homeostatic levels of H4K16ac. The MSL complex is also involved in gene dosage by promoting up-regulation of genes expressed by the X chromosome. X up-regulation is required to compensate for autosomal biallelic expression. The MSL complex also participates in gene dosage compensation by promoting expression of Tsix non-coding RNA. As part of the NSL histone acetyltransferase complex, catalyzes histone H4 acetylation at 'Lys-5'- and 'Lys-8' (H4K5ac and H4K8ac) at transcription start sites and promotes transcription initiation. The NSL complex also acts as a regulator of gene expression in mitochondria: KAT8 associates with mitochondrial DNA and controls expression of respiratory genes in an acetyltransferase-dependent mechanism. Also functions as an acetyltransferase for non-histone targets, such as ALKBH5, COX17, IRF3, KDM1A/LSD1, LMNA, PAX7 or TP53/p53. Acts as an inhibitor of antiviral immunity by acetylating IRF3, preventing IRF3 recruitment to promoters. Acts as a regulator of asymmetric division in muscle stem cells by mediating acetylation of PAX7. As part of the NSL complex, acetylates TP53/p53 at 'Lys-120'. Acts as a regulator of epithelial-to-mesenchymal transition as part of the NSL complex by mediating acetylation of KDM1A/LSD1. The NSL complex is required for nuclear architecture maintenance by mediating acetylation of LMNA. Promotes mitochondrial integrity by catalyzing acetylation of COX17. In addition to protein acetyltransferase activity, able to mediate protein propionylation. In Mus musculus (Mouse), this protein is Histone acetyltransferase KAT8.